The sequence spans 428 residues: Histidinol dehydrogenase (428 aa).

Residues Y125, Q186, and N209 each coordinate NAD(+). Residues S232, Q254, and H257 each contribute to the substrate site. Residues Q254 and H257 each coordinate Zn(2+). Catalysis depends on proton acceptor residues E322 and H323. Substrate contacts are provided by H323, D356, E410, and H415. Residue D356 participates in Zn(2+) binding. H415 provides a ligand contact to Zn(2+).

This sequence belongs to the histidinol dehydrogenase family. Zn(2+) serves as cofactor.

It catalyses the reaction L-histidinol + 2 NAD(+) + H2O = L-histidine + 2 NADH + 3 H(+). It functions in the pathway amino-acid biosynthesis; L-histidine biosynthesis; L-histidine from 5-phospho-alpha-D-ribose 1-diphosphate: step 9/9. Functionally, catalyzes the sequential NAD-dependent oxidations of L-histidinol to L-histidinaldehyde and then to L-histidine. The polypeptide is Histidinol dehydrogenase (Lactiplantibacillus plantarum (strain ATCC BAA-793 / NCIMB 8826 / WCFS1) (Lactobacillus plantarum)).